A 559-amino-acid polypeptide reads, in one-letter code: Urocanate hydratase (559 aa).

Residues 49–50 (GG), Gln-127, 173–175 (GMG), Asp-193, Arg-198, 239–240 (NA), 260–264 (QTSAH), 270–271 (YL), and Tyr-319 contribute to the NAD(+) site. The active site involves Cys-407. NAD(+) is bound at residue Gly-489.

Belongs to the urocanase family. The cofactor is NAD(+).

Its subcellular location is the cytoplasm. The enzyme catalyses 4-imidazolone-5-propanoate = trans-urocanate + H2O. It participates in amino-acid degradation; L-histidine degradation into L-glutamate; N-formimidoyl-L-glutamate from L-histidine: step 2/3. Its function is as follows. Catalyzes the conversion of urocanate to 4-imidazolone-5-propionate. The polypeptide is Urocanate hydratase (Shouchella clausii (strain KSM-K16) (Alkalihalobacillus clausii)).